A 504-amino-acid polypeptide reads, in one-letter code: Probable alpha-L-arabinofuranosidase C (504 aa).

N-linked (GlcNAc...) asparagine glycosylation is found at N152, N181, and N269.

This sequence belongs to the glycosyl hydrolase 51 family.

It is found in the secreted. The enzyme catalyses Hydrolysis of terminal non-reducing alpha-L-arabinofuranoside residues in alpha-L-arabinosides.. Its pathway is glycan metabolism; L-arabinan degradation. Alpha-L-arabinofuranosidase involved in the degradation of arabinoxylan, a major component of plant hemicellulose. Acts only on small linear 1,5-alpha-linked L-arabinofuranosyl oligosaccharides. This chain is Probable alpha-L-arabinofuranosidase C (abfC), found in Aspergillus flavus (strain ATCC 200026 / FGSC A1120 / IAM 13836 / NRRL 3357 / JCM 12722 / SRRC 167).